The following is a 1397-amino-acid chain: DNA-directed RNA polymerase subunit beta' (1397 aa).

4 residues coordinate Zn(2+): C75, C77, C90, and C93. 3 residues coordinate Mg(2+): D465, D467, and D469. Positions 819, 893, 900, and 903 each coordinate Zn(2+).

It belongs to the RNA polymerase beta' chain family. In terms of assembly, the RNAP catalytic core consists of 2 alpha, 1 beta, 1 beta' and 1 omega subunit. When a sigma factor is associated with the core the holoenzyme is formed, which can initiate transcription. Mg(2+) serves as cofactor. It depends on Zn(2+) as a cofactor.

The enzyme catalyses RNA(n) + a ribonucleoside 5'-triphosphate = RNA(n+1) + diphosphate. Functionally, DNA-dependent RNA polymerase catalyzes the transcription of DNA into RNA using the four ribonucleoside triphosphates as substrates. The chain is DNA-directed RNA polymerase subunit beta' from Acinetobacter baumannii (strain SDF).